The primary structure comprises 428 residues: Tyrosine--tRNA ligase (428 aa).

Y36 is an L-tyrosine binding site. Residues 41–50 (PTAPSLHAGH) carry the 'HIGH' region motif. Positions 171 and 175 each coordinate L-tyrosine. The 'KMSKS' region signature appears at 231 to 235 (KFGKS). K234 contacts ATP. Positions 359–416 (DSIVDLLVETGLAASKGAARRNVAEGGVYVNNIRIESDEWIPQHSDFLHERWLVLRRG) constitute an S4 RNA-binding domain.

This sequence belongs to the class-I aminoacyl-tRNA synthetase family. TyrS type 1 subfamily. In terms of assembly, homodimer.

The protein resides in the cytoplasm. The catalysed reaction is tRNA(Tyr) + L-tyrosine + ATP = L-tyrosyl-tRNA(Tyr) + AMP + diphosphate + H(+). Catalyzes the attachment of tyrosine to tRNA(Tyr) in a two-step reaction: tyrosine is first activated by ATP to form Tyr-AMP and then transferred to the acceptor end of tRNA(Tyr). This is Tyrosine--tRNA ligase from Mycolicibacterium fortuitum (Mycobacterium fortuitum).